Reading from the N-terminus, the 361-residue chain is MGSIPPRTLLLLLAGALTLKDTQAGSHSMRYFYTSVSRPGLGEPRFIIVGYVDDTQFVRFDSDAASPRMEQRAPWMGQVEPEYWDQQTQIAKDTAQTFRVNLNTALRYYNQSAAGSHTFQTMFGCEVWADGRFFHGYRQYAYDGADYIALNEDLRSWTAADTAAQNTQRKWEAAGEAERHRAYLERECVEWLRRYLEMGKETLQRADPPKAHVTHHPASDREATLRCWALGFYPAEISLTWQRDGEDQTQDTELVETRPGGDGTFQKWAAVVVPSGEEQRYTCRVQHEGLPEPLTLTWEPPAQPTALIVGIVAGVLGVLLILGAVVAVVRRKKHSSDGKGGRYTPAAGGHRDQGSDDSLMP.

The signal sequence occupies residues 1–24; that stretch reads MGSIPPRTLLLLLAGALTLKDTQA. Positions 25–114 are alpha-1; the sequence is GSHSMRYFYT…ALRYYNQSAA (90 aa). Topologically, residues 25–308 are extracellular; the sequence is GSHSMRYFYT…EPPAQPTALI (284 aa). Asn-110 is a glycosylation site (N-linked (GlcNAc...) asparagine). The segment at 115 to 206 is alpha-2; sequence GSHTFQTMFG…EMGKETLQRA (92 aa). Intrachain disulfides connect Cys-125-Cys-188 and Cys-227-Cys-283. Residues 207 to 298 form an alpha-3 region; the sequence is DPPKAHVTHH…GLPEPLTLTW (92 aa). One can recognise an Ig-like C1-type domain in the interval 209–297; that stretch reads PKAHVTHHPA…EGLPEPLTLT (89 aa). A connecting peptide region spans residues 299-308; it reads EPPAQPTALI. The chain crosses the membrane as a helical span at residues 309–329; it reads VGIVAGVLGVLLILGAVVAVV. Topologically, residues 330–361 are cytoplasmic; that stretch reads RRKKHSSDGKGGRYTPAAGGHRDQGSDDSLMP. The segment at 335-361 is disordered; sequence SSDGKGGRYTPAAGGHRDQGSDDSLMP. Ser-355 and Ser-358 each carry phosphoserine.

This sequence belongs to the MHC class I family. As to quaternary structure, heterodimer of an alpha chain and a beta chain (beta-2-microglobulin).

It localises to the membrane. In terms of biological role, involved in the presentation of foreign antigens to the immune system. This chain is RLA class I histocompatibility antigen, alpha chain 19-1, found in Oryctolagus cuniculus (Rabbit).